Consider the following 1077-residue polypeptide: Carbamoyl phosphate synthase large chain (1077 aa).

Positions 1-403 (MPKRTDIQSI…SLHKALRGLE (403 aa)) are carboxyphosphate synthetic domain. Positions 129, 169, 175, 176, 208, 210, 215, 241, 242, 243, 285, and 299 each coordinate ATP. Positions 133 to 328 (DKAMKSIGLE…IAKIAAKLAV (196 aa)) constitute an ATP-grasp 1 domain. Residues Gln-285, Glu-299, and Asn-301 each contribute to the Mg(2+) site. Mn(2+) is bound by residues Gln-285, Glu-299, and Asn-301. The tract at residues 404–553 (VGATGFDEMV…YSSYDDECEA (150 aa)) is oligomerization domain. The carbamoyl phosphate synthetic domain stretch occupies residues 554 to 935 (NPTDKEKIMV…AYAKAELGCG (382 aa)). In terms of domain architecture, ATP-grasp 2 spans 678–869 (QQAVDRLGLL…LAKIAARVMA (192 aa)). ATP contacts are provided by Arg-714, Arg-753, Leu-755, Glu-760, Gly-785, Val-786, His-787, Ser-788, Gln-828, and Glu-840. Residues Gln-828, Glu-840, and Asn-842 each coordinate Mg(2+). The Mn(2+) site is built by Gln-828, Glu-840, and Asn-842. The region spanning 936–1077 (NVYPEGGRAL…HAQVQASLKA (142 aa)) is the MGS-like domain. An allosteric domain region spans residues 936–1077 (NVYPEGGRAL…HAQVQASLKA (142 aa)).

Belongs to the CarB family. Composed of two chains; the small (or glutamine) chain promotes the hydrolysis of glutamine to ammonia, which is used by the large (or ammonia) chain to synthesize carbamoyl phosphate. Tetramer of heterodimers (alpha,beta)4. Mg(2+) serves as cofactor. Requires Mn(2+) as cofactor.

It carries out the reaction hydrogencarbonate + L-glutamine + 2 ATP + H2O = carbamoyl phosphate + L-glutamate + 2 ADP + phosphate + 2 H(+). It catalyses the reaction hydrogencarbonate + NH4(+) + 2 ATP = carbamoyl phosphate + 2 ADP + phosphate + 2 H(+). It participates in amino-acid biosynthesis; L-arginine biosynthesis; carbamoyl phosphate from bicarbonate: step 1/1. It functions in the pathway pyrimidine metabolism; UMP biosynthesis via de novo pathway; (S)-dihydroorotate from bicarbonate: step 1/3. Its function is as follows. Large subunit of the glutamine-dependent carbamoyl phosphate synthetase (CPSase). CPSase catalyzes the formation of carbamoyl phosphate from the ammonia moiety of glutamine, carbonate, and phosphate donated by ATP, constituting the first step of 2 biosynthetic pathways, one leading to arginine and/or urea and the other to pyrimidine nucleotides. The large subunit (synthetase) binds the substrates ammonia (free or transferred from glutamine from the small subunit), hydrogencarbonate and ATP and carries out an ATP-coupled ligase reaction, activating hydrogencarbonate by forming carboxy phosphate which reacts with ammonia to form carbamoyl phosphate. This is Carbamoyl phosphate synthase large chain from Vibrio vulnificus (strain CMCP6).